The chain runs to 322 residues: DNA repair and recombination protein RadA (322 aa).

ATP is bound at residue 105 to 112 (GMFGSGKT).

The protein belongs to the eukaryotic RecA-like protein family.

Its function is as follows. Involved in DNA repair and in homologous recombination. Binds and assemble on single-stranded DNA to form a nucleoprotein filament. Hydrolyzes ATP in a ssDNA-dependent manner and promotes DNA strand exchange between homologous DNA molecules. The protein is DNA repair and recombination protein RadA of Methanococcus maripaludis (strain DSM 14266 / JCM 13030 / NBRC 101832 / S2 / LL).